The sequence spans 335 residues: Holliday junction branch migration complex subunit RuvB (335 aa).

The interval 1–183 is large ATPase domain (RuvB-L); the sequence is MDERIISSET…FGVIDHLEFY (183 aa). ATP contacts are provided by residues Leu-22, Arg-23, Gly-64, Lys-67, Thr-68, Thr-69, 130–132, Arg-173, Tyr-183, and Arg-220; that span reads EDY. Thr-68 contributes to the Mg(2+) binding site. The interval 184–254 is small ATPAse domain (RuvB-S); sequence TEEQLTEIVL…LAKEALTLLQ (71 aa). A head domain (RuvB-H) region spans residues 257 to 335; it reads PRGLDTIDQK…HLGISYEKEV (79 aa). DNA-binding residues include Arg-293, Arg-312, and Arg-317.

The protein belongs to the RuvB family. Homohexamer. Forms an RuvA(8)-RuvB(12)-Holliday junction (HJ) complex. HJ DNA is sandwiched between 2 RuvA tetramers; dsDNA enters through RuvA and exits via RuvB. An RuvB hexamer assembles on each DNA strand where it exits the tetramer. Each RuvB hexamer is contacted by two RuvA subunits (via domain III) on 2 adjacent RuvB subunits; this complex drives branch migration. In the full resolvosome a probable DNA-RuvA(4)-RuvB(12)-RuvC(2) complex forms which resolves the HJ.

The protein resides in the cytoplasm. The catalysed reaction is ATP + H2O = ADP + phosphate + H(+). Its function is as follows. The RuvA-RuvB-RuvC complex processes Holliday junction (HJ) DNA during genetic recombination and DNA repair, while the RuvA-RuvB complex plays an important role in the rescue of blocked DNA replication forks via replication fork reversal (RFR). RuvA specifically binds to HJ cruciform DNA, conferring on it an open structure. The RuvB hexamer acts as an ATP-dependent pump, pulling dsDNA into and through the RuvAB complex. RuvB forms 2 homohexamers on either side of HJ DNA bound by 1 or 2 RuvA tetramers; 4 subunits per hexamer contact DNA at a time. Coordinated motions by a converter formed by DNA-disengaged RuvB subunits stimulates ATP hydrolysis and nucleotide exchange. Immobilization of the converter enables RuvB to convert the ATP-contained energy into a lever motion, pulling 2 nucleotides of DNA out of the RuvA tetramer per ATP hydrolyzed, thus driving DNA branch migration. The RuvB motors rotate together with the DNA substrate, which together with the progressing nucleotide cycle form the mechanistic basis for DNA recombination by continuous HJ branch migration. Branch migration allows RuvC to scan DNA until it finds its consensus sequence, where it cleaves and resolves cruciform DNA. This is Holliday junction branch migration complex subunit RuvB from Listeria welshimeri serovar 6b (strain ATCC 35897 / DSM 20650 / CCUG 15529 / CIP 8149 / NCTC 11857 / SLCC 5334 / V8).